The sequence spans 600 residues: Dihydroxy-acid dehydratase (600 aa).

Asp82 is a Mg(2+) binding site. Cys123 provides a ligand contact to [2Fe-2S] cluster. Residues Asp124 and Lys125 each coordinate Mg(2+). An N6-carboxylysine modification is found at Lys125. Residue Cys192 participates in [2Fe-2S] cluster binding. Glu489 lines the Mg(2+) pocket. Ser515 serves as the catalytic Proton acceptor.

Belongs to the IlvD/Edd family. Homodimer. [2Fe-2S] cluster serves as cofactor. Mg(2+) is required as a cofactor.

The catalysed reaction is (2R)-2,3-dihydroxy-3-methylbutanoate = 3-methyl-2-oxobutanoate + H2O. It catalyses the reaction (2R,3R)-2,3-dihydroxy-3-methylpentanoate = (S)-3-methyl-2-oxopentanoate + H2O. It functions in the pathway amino-acid biosynthesis; L-isoleucine biosynthesis; L-isoleucine from 2-oxobutanoate: step 3/4. It participates in amino-acid biosynthesis; L-valine biosynthesis; L-valine from pyruvate: step 3/4. Functionally, functions in the biosynthesis of branched-chain amino acids. Catalyzes the dehydration of (2R,3R)-2,3-dihydroxy-3-methylpentanoate (2,3-dihydroxy-3-methylvalerate) into 2-oxo-3-methylpentanoate (2-oxo-3-methylvalerate) and of (2R)-2,3-dihydroxy-3-methylbutanoate (2,3-dihydroxyisovalerate) into 2-oxo-3-methylbutanoate (2-oxoisovalerate), the penultimate precursor to L-isoleucine and L-valine, respectively. The chain is Dihydroxy-acid dehydratase from Bacteroides fragilis (strain YCH46).